Reading from the N-terminus, the 379-residue chain is Probable G-protein coupled receptor 27 (379 aa).

At 1 to 26 the chain is on the extracellular side; sequence MANASEPGGGGSGGGAEAAALGLRLA. Asparagine 3 carries N-linked (GlcNAc...) asparagine glycosylation. A helical transmembrane segment spans residues 27-47; the sequence is TLSLLLCVSLAGNVLFALLIV. Residues 48–58 lie on the Cytoplasmic side of the membrane; sequence RERSLHRAPYY. Residues 59-79 traverse the membrane as a helical segment; it reads LLLDLCLADGLRALACLPAVM. Over 80–100 the chain is Extracellular; sequence LAARRAAAAAGTPPGALGCKL. A disulfide bond links cysteine 98 and cysteine 175. A helical transmembrane segment spans residues 101 to 121; the sequence is LAFLAALFCFHAAFLLLGVGV. The Cytoplasmic portion of the chain corresponds to 122–142; it reads TRYLAIAHHRFYAERLAGWPC. A helical membrane pass occupies residues 143–163; it reads AAMLVCAAWALALAAAFPPVL. The Extracellular portion of the chain corresponds to 164–185; the sequence is DGGGADDEDAPCALEQRPDGAP. The chain crosses the membrane as a helical span at residues 186–206; it reads GALGFLLLLAAVVGATHLVYL. The Cytoplasmic segment spans residues 207–289; sequence RLLFFIHDRR…FKTEKRLCKM (83 aa). The chain crosses the membrane as a helical span at residues 290–310; sequence FYAITLLFLLLWGPYVVASYL. The Extracellular segment spans residues 311–324; the sequence is RVLVRPGAVPQAYL. Residues 325-345 traverse the membrane as a helical segment; it reads TASVWLTFAQAGINPVVCFLF. Topologically, residues 346 to 379 are cytoplasmic; the sequence is NRELRDCFRAQFPCCQSPQATQATLPCDLKGIGL.

It belongs to the G-protein coupled receptor 1 family.

Its subcellular location is the cell membrane. Functionally, orphan receptor. Possible candidate for amine-like G-protein coupled receptor. This Mus musculus (Mouse) protein is Probable G-protein coupled receptor 27 (Gpr27).